A 322-amino-acid polypeptide reads, in one-letter code: Ferredoxin--NADP reductase (322 aa).

8 residues coordinate FAD: Ser-14, Asp-33, Gln-41, Tyr-46, Ala-86, Phe-120, Asp-278, and Ser-319.

Belongs to the ferredoxin--NADP reductase type 2 family. Homodimer. The cofactor is FAD.

It carries out the reaction 2 reduced [2Fe-2S]-[ferredoxin] + NADP(+) + H(+) = 2 oxidized [2Fe-2S]-[ferredoxin] + NADPH. The chain is Ferredoxin--NADP reductase from Salinispora arenicola (strain CNS-205).